The sequence spans 1142 residues: SNF1-activating kinase 1 (1142 aa).

The interval 22 to 41 is disordered; the sequence is ELEKSGTSSSVSLRSPTKSS. T43 bears the Phosphothreonine mark. Polar residues predominate over residues 82–93; the sequence is QHQQHISSSLAK. Residues 82-107 are disordered; that stretch reads QHQQHISSSLAKTPTTTSSFCSSGSS. The segment covering 94–107 has biased composition (low complexity); sequence TPTTTSSFCSSGSS. In terms of domain architecture, Protein kinase spans 133–448; it reads YEIIKELGHG…IPAIKKHPFV (316 aa). Residues 139–147 and K162 each bind ATP; that span reads LGHGQHGKV. D277 acts as the Proton acceptor in catalysis. Disordered stretches follow at residues 634–678, 694–799, 825–875, 919–971, 1005–1027, and 1066–1142; these read SPEA…VLPQ, NSLL…NSPI, SHFN…AYSE, KSSL…QKGS, SQPI…KATT, and STNA…SALP. Positions 640 to 656 are enriched in polar residues; it reads SVSSVPNLPSAPSSTRL. Residues 694-706 are compositionally biased toward low complexity; sequence NSLLRNSSSHLTS. Residues 707 to 741 show a composition bias toward polar residues; that stretch reads YNSGRPSSRTGRMNSRNQNLPKIPNSLSKISTTKL. Residues 742 to 751 show a composition bias toward basic and acidic residues; it reads TELRVPKDSE. Residues 785-799 show a composition bias toward polar residues; the sequence is NINSSDKSGSKNSPI. Low complexity-rich tracts occupy residues 835 to 868 and 920 to 936; these read SSQS…RNSS and SSLN…SSSS. Residues 958 to 971 are compositionally biased toward polar residues; it reads SKLSELSNSPQKGS. Phosphoserine is present on S964. Over residues 1096-1111 the composition is skewed to basic and acidic residues; it reads NDEHARNTSCHGDKGQ. S1126 is modified (phosphoserine). Residues 1133–1142 show a composition bias toward basic and acidic residues; that stretch reads NEEKRRSALP.

It belongs to the protein kinase superfamily. Ser/Thr protein kinase family. Associates with the SNF1 kinase complex. Interacts with SNF1 and REG1. Autophosphorylated.

It localises to the cytoplasm. The enzyme catalyses L-seryl-[protein] + ATP = O-phospho-L-seryl-[protein] + ADP + H(+). It carries out the reaction L-threonyl-[protein] + ATP = O-phospho-L-threonyl-[protein] + ADP + H(+). Its function is as follows. Serine/threonine-protein kinase that phosphorylates SNF1, the catalytic subunit of the SNF1 kinase complex. Acts as an activator of the SNF1 kinase complex and controls its nuclear localization upon glucose and nitrogen depletion. Also required for SNF1 kinase activation under other stress conditions like alkaline pH or presence of cadmium. This is SNF1-activating kinase 1 (SAK1) from Saccharomyces cerevisiae (strain ATCC 204508 / S288c) (Baker's yeast).